Consider the following 812-residue polypeptide: Phospholipase D alpha 1 (812 aa).

In terms of domain architecture, C2 spans 1-130; the sequence is MAQILLHGTL…LGGEEIDKWL (130 aa). Asp-190 serves as a coordination point for Ca(2+). Positions 330–368 constitute a PLD phosphodiesterase 1 domain; that stretch reads TMFTHHQKIVVVDHEMPNQGSQQRRIVSFIGGIDLCDGR. Catalysis depends on residues His-335, Lys-337, and Asp-342. His-335 provides a ligand contact to a 1,2-diacyl-sn-glycero-3-phosphate. Residues His-374 and His-408 each coordinate Ca(2+). A 1,2-diacyl-sn-glycero-3-phosphate-binding residues include Gln-524 and His-663. Residues 658–685 enclose the PLD phosphodiesterase 2 domain; that stretch reads FMIYVHTKMMIVDDEYIIIGSANINQRS. Residues His-663, Lys-665, and Asp-670 contribute to the active site. Glu-724 serves as a coordination point for Ca(2+).

Belongs to the phospholipase D family. C2-PLD subfamily. Monomer. The cofactor is Ca(2+).

The catalysed reaction is a 1,2-diacyl-sn-glycero-3-phosphocholine + H2O = a 1,2-diacyl-sn-glycero-3-phosphate + choline + H(+). Its function is as follows. Hydrolyzes glycerol-phospholipids at the terminal phosphodiesteric bond. Plays an important role in various cellular processes. The sequence is that of Phospholipase D alpha 1 (PLD1) from Zea mays (Maize).